The following is a 521-amino-acid chain: Bifunctional purine biosynthesis protein PurH (521 aa).

Residues 1-145 (MIKQALISVS…KNHRDVTVVV (145 aa)) enclose the MGS-like domain.

It belongs to the PurH family.

It carries out the reaction (6R)-10-formyltetrahydrofolate + 5-amino-1-(5-phospho-beta-D-ribosyl)imidazole-4-carboxamide = 5-formamido-1-(5-phospho-D-ribosyl)imidazole-4-carboxamide + (6S)-5,6,7,8-tetrahydrofolate. It catalyses the reaction IMP + H2O = 5-formamido-1-(5-phospho-D-ribosyl)imidazole-4-carboxamide. It functions in the pathway purine metabolism; IMP biosynthesis via de novo pathway; 5-formamido-1-(5-phospho-D-ribosyl)imidazole-4-carboxamide from 5-amino-1-(5-phospho-D-ribosyl)imidazole-4-carboxamide (10-formyl THF route): step 1/1. It participates in purine metabolism; IMP biosynthesis via de novo pathway; IMP from 5-formamido-1-(5-phospho-D-ribosyl)imidazole-4-carboxamide: step 1/1. The protein is Bifunctional purine biosynthesis protein PurH of Burkholderia ambifaria (strain ATCC BAA-244 / DSM 16087 / CCUG 44356 / LMG 19182 / AMMD) (Burkholderia cepacia (strain AMMD)).